The following is a 434-amino-acid chain: ATP-dependent protease ATPase subunit HslU (434 aa).

ATP-binding positions include Ile-18, 60–65 (GVGKTE), Asp-247, Glu-312, and Arg-384.

The protein belongs to the ClpX chaperone family. HslU subfamily. As to quaternary structure, a double ring-shaped homohexamer of HslV is capped on each side by a ring-shaped HslU homohexamer. The assembly of the HslU/HslV complex is dependent on binding of ATP.

Its subcellular location is the cytoplasm. Functionally, ATPase subunit of a proteasome-like degradation complex; this subunit has chaperone activity. The binding of ATP and its subsequent hydrolysis by HslU are essential for unfolding of protein substrates subsequently hydrolyzed by HslV. HslU recognizes the N-terminal part of its protein substrates and unfolds these before they are guided to HslV for hydrolysis. The polypeptide is ATP-dependent protease ATPase subunit HslU (Brucella melitensis biotype 2 (strain ATCC 23457)).